Reading from the N-terminus, the 672-residue chain is tRNA 5-methylaminomethyl-2-thiouridine biosynthesis bifunctional protein MnmC (672 aa).

The tract at residues 1–241 is tRNA (mnm(5)s(2)U34)-methyltransferase; that stretch reads MHKVQFADVH…KRECLQGVKA (241 aa). Residues 269–672 form an FAD-dependent cmnm(5)s(2)U34 oxidoreductase region; the sequence is IGGGIASVFS…LLKGSQVKQG (404 aa).

This sequence in the N-terminal section; belongs to the methyltransferase superfamily. tRNA (mnm(5)s(2)U34)-methyltransferase family. The protein in the C-terminal section; belongs to the DAO family. Requires FAD as cofactor.

The protein localises to the cytoplasm. The enzyme catalyses 5-aminomethyl-2-thiouridine(34) in tRNA + S-adenosyl-L-methionine = 5-methylaminomethyl-2-thiouridine(34) in tRNA + S-adenosyl-L-homocysteine + H(+). Its function is as follows. Catalyzes the last two steps in the biosynthesis of 5-methylaminomethyl-2-thiouridine (mnm(5)s(2)U) at the wobble position (U34) in tRNA. Catalyzes the FAD-dependent demodification of cmnm(5)s(2)U34 to nm(5)s(2)U34, followed by the transfer of a methyl group from S-adenosyl-L-methionine to nm(5)s(2)U34, to form mnm(5)s(2)U34. This chain is tRNA 5-methylaminomethyl-2-thiouridine biosynthesis bifunctional protein MnmC, found in Pasteurella multocida (strain Pm70).